The sequence spans 337 residues: Casein kinase I isoform alpha (337 aa).

The Protein kinase domain occupies 17-285 (YKLVRKIGSG…YLRQLFRILF (269 aa)). ATP contacts are provided by residues 23–31 (IGSGSFGDI) and Lys46. Asp136 acts as the Proton acceptor in catalysis. Over residues 309–325 (AASSSGQGQQAQTPTGK) the composition is skewed to low complexity. Residues 309–337 (AASSSGQGQQAQTPTGKQTDKSKSNMKGF) are disordered.

Belongs to the protein kinase superfamily. CK1 Ser/Thr protein kinase family. Casein kinase I subfamily. Post-translationally, autophosphorylated.

It is found in the cytoplasm. It localises to the cytoskeleton. The protein localises to the microtubule organizing center. Its subcellular location is the centrosome. The protein resides in the chromosome. It is found in the centromere. It localises to the kinetochore. The protein localises to the nucleus speckle. Its subcellular location is the cilium basal body. The protein resides in the spindle. The enzyme catalyses L-seryl-[protein] + ATP = O-phospho-L-seryl-[protein] + ADP + H(+). The catalysed reaction is L-threonyl-[protein] + ATP = O-phospho-L-threonyl-[protein] + ADP + H(+). In terms of biological role, casein kinases are operationally defined by their preferential utilization of acidic proteins such as caseins as substrates. It can phosphorylate a large number of proteins. Participates in Wnt signaling. May play a role in segregating chromosomes during mitosis. May play a role in keratin cytoskeleton disassembly. This Gallus gallus (Chicken) protein is Casein kinase I isoform alpha (CSNK1A1).